Reading from the N-terminus, the 1672-residue chain is Probable outer membrane protein PmpB (1672 aa).

Positions 1 to 14 (MSSMKWLSATAVFA) are cleaved as a signal peptide. Disordered stretches follow at residues 69–122 (IPVK…GGAF), 203–263 (NTAE…GSGG), 384–415 (EAQT…AKGG), and 734–765 (STGV…PAPA). Low complexity-rich tracts occupy residues 77-88 (DDSSTSTPTTSS), 100-111 (SSSSSPNSGDTS), and 203-234 (NTAE…SKVQ). Polar residues-rich tracts occupy residues 235–256 (SLFT…QTPS) and 384–399 (EAQT…SQSG). Low complexity predominate over residues 734-744 (STGVATTATTS). The Autotransporter domain occupies 1379–1672 (DDAAYNNFWV…MTSCGARMIF (294 aa)).

It belongs to the PMP outer membrane protein family.

It localises to the secreted. The protein resides in the cell wall. Its subcellular location is the cell outer membrane. The protein is Probable outer membrane protein PmpB (pmpB) of Chlamydia muridarum (strain MoPn / Nigg).